We begin with the raw amino-acid sequence, 126 residues long: 5-carboxymethyl-2-hydroxymuconate Delta-isomerase (126 aa).

Proline 2 acts as the Proton acceptor; via imino nitrogen in catalysis.

In terms of assembly, homotrimer.

It carries out the reaction (2E,4Z)-5-hydroxypenta-2,4-diene-1,2,5-tricarboxylate = (3E,5R)-5-carboxy-2-oxohept-3-enedioate. It participates in aromatic compound metabolism; 4-hydroxyphenylacetate degradation; pyruvate and succinate semialdehyde from 4-hydroxyphenylacetate: step 4/7. In terms of biological role, transforms 5-carboxymethyl-2-hydroxy-muconic acid (CHM) into 5-oxo-pent-3-ene-1,2,5-tricarboxylic acid (OPET). This is 5-carboxymethyl-2-hydroxymuconate Delta-isomerase (hpcD) from Escherichia coli.